The chain runs to 535 residues: uncharacterized protein (535 aa).

WD repeat units follow at residues 189 to 226, 228 to 267, 269 to 314, 320 to 359, 362 to 404, and 462 to 505; these read RDDFYTSLLSWSPKGDLAIGLAENIYLWSKELGPTRVL, ESIYDVSSVAYSYNGDILAVGRVDGTLQFWQDNERVPRIS, HHPG…AVLV, AHDEQVCGLTWNHDGSQFASGGNDNRVCLFKGSDLRQPLY, QQNA…KIDE, and VHSV…SWHN.

It belongs to the WD repeat CDC20/Fizzy family.

This is an uncharacterized protein from Schizosaccharomyces pombe (strain 972 / ATCC 24843) (Fission yeast).